The chain runs to 306 residues: Deoxyribokinase (306 aa).

Substrate is bound by residues 10–12 (MVD), 38–42 (GKGAN), and Glu139. Residues Asn184 and 220 to 225 (TMGEKG) contribute to the ATP site. K(+) is bound by residues Asp246 and Ser248. ATP is bound at residue 251–252 (GD). Substrate is bound at residue Asp252. The Proton acceptor role is filled by Asp252. K(+) is bound by residues Ser282, Gly285, Gly287, and Ser291.

Belongs to the carbohydrate kinase PfkB family. Deoxyribokinase subfamily. In terms of assembly, homodimer. Mg(2+) serves as cofactor.

The protein resides in the cytoplasm. The catalysed reaction is 2-deoxy-D-ribose + ATP = 2-deoxy-D-ribose 5-phosphate + ADP + H(+). In terms of biological role, catalyzes the ATP-dependent phosphorylation of 2-deoxy-D-ribose to 2-deoxy-D-ribose 5-phosphate (dRib-5P), allowing the use of deoxyribose as the sole carbon source. Can also use D-ribose, with much lower efficiency. This is Deoxyribokinase from Salmonella typhi.